The primary structure comprises 131 residues: Small ribosomal subunit protein eS24 (131 aa).

At Met-1 the chain carries N-acetylmethionine. Thr-9 carries the post-translational modification Phosphothreonine. Residue Lys-37 forms a Glycyl lysine isopeptide (Lys-Gly) (interchain with G-Cter in SUMO2) linkage. The segment covering 90 to 100 (RLARHGLYEKK) has biased composition (basic and acidic residues). Residues 90-131 (RLARHGLYEKKKTSRKQRKERKNRMKKVRGTAKANVGAGKKK) are disordered. Basic residues predominate over residues 101 to 119 (KTSRKQRKERKNRMKKVRG).

Belongs to the eukaryotic ribosomal protein eS24 family. Component of the small ribosomal subunit. Part of the small subunit (SSU) processome, composed of more than 70 proteins and the RNA chaperone small nucleolar RNA (snoRNA) U3.

The protein localises to the cytoplasm. It localises to the nucleus. It is found in the nucleolus. Functionally, component of the small ribosomal subunit. The ribosome is a large ribonucleoprotein complex responsible for the synthesis of proteins in the cell. Required for processing of pre-rRNA and maturation of 40S ribosomal subunits. Part of the small subunit (SSU) processome, first precursor of the small eukaryotic ribosomal subunit. During the assembly of the SSU processome in the nucleolus, many ribosome biogenesis factors, an RNA chaperone and ribosomal proteins associate with the nascent pre-rRNA and work in concert to generate RNA folding, modifications, rearrangements and cleavage as well as targeted degradation of pre-ribosomal RNA by the RNA exosome. The polypeptide is Small ribosomal subunit protein eS24 (RPS24) (Pongo abelii (Sumatran orangutan)).